Here is a 180-residue protein sequence, read N- to C-terminus: Crossover junction endodeoxyribonuclease RuvC (180 aa).

Active-site residues include Asp7, Glu66, and Asp138. Asp7, Glu66, and Asp138 together coordinate Mg(2+).

The protein belongs to the RuvC family. As to quaternary structure, homodimer which binds Holliday junction (HJ) DNA. The HJ becomes 2-fold symmetrical on binding to RuvC with unstacked arms; it has a different conformation from HJ DNA in complex with RuvA. In the full resolvosome a probable DNA-RuvA(4)-RuvB(12)-RuvC(2) complex forms which resolves the HJ. The cofactor is Mg(2+).

It is found in the cytoplasm. The enzyme catalyses Endonucleolytic cleavage at a junction such as a reciprocal single-stranded crossover between two homologous DNA duplexes (Holliday junction).. Functionally, the RuvA-RuvB-RuvC complex processes Holliday junction (HJ) DNA during genetic recombination and DNA repair. Endonuclease that resolves HJ intermediates. Cleaves cruciform DNA by making single-stranded nicks across the HJ at symmetrical positions within the homologous arms, yielding a 5'-phosphate and a 3'-hydroxyl group; requires a central core of homology in the junction. The consensus cleavage sequence is 5'-(A/T)TT(C/G)-3'. Cleavage occurs on the 3'-side of the TT dinucleotide at the point of strand exchange. HJ branch migration catalyzed by RuvA-RuvB allows RuvC to scan DNA until it finds its consensus sequence, where it cleaves and resolves the cruciform DNA. This is Crossover junction endodeoxyribonuclease RuvC from Paraburkholderia xenovorans (strain LB400).